The chain runs to 337 residues: UDP-3-O-acylglucosamine N-acyltransferase 2 (337 aa).

His-238 functions as the Proton acceptor in the catalytic mechanism.

The protein belongs to the transferase hexapeptide repeat family. LpxD subfamily. Homotrimer.

It catalyses the reaction a UDP-3-O-[(3R)-3-hydroxyacyl]-alpha-D-glucosamine + a (3R)-hydroxyacyl-[ACP] = a UDP-2-N,3-O-bis[(3R)-3-hydroxyacyl]-alpha-D-glucosamine + holo-[ACP] + H(+). Its pathway is bacterial outer membrane biogenesis; LPS lipid A biosynthesis. Its function is as follows. Catalyzes the N-acylation of UDP-3-O-acylglucosamine using 3-hydroxyacyl-ACP as the acyl donor. Is involved in the biosynthesis of lipid A, a phosphorylated glycolipid that anchors the lipopolysaccharide to the outer membrane of the cell. In Francisella tularensis subsp. tularensis (strain FSC 198), this protein is UDP-3-O-acylglucosamine N-acyltransferase 2.